Consider the following 276-residue polypeptide: Dermonecrotic toxin Ls4SicTox-alphaIII1i (276 aa).

The active site involves His3. Glu23 and Asp25 together coordinate Mg(2+). Residue His38 is the Nucleophile of the active site. A disulfide bridge links Cys42 with Cys48. Asp82 provides a ligand contact to Mg(2+).

The protein belongs to the arthropod phospholipase D family. Class I subfamily. The cofactor is Mg(2+). In terms of tissue distribution, expressed by the venom gland.

Its subcellular location is the secreted. It carries out the reaction an N-(acyl)-sphingosylphosphocholine = an N-(acyl)-sphingosyl-1,3-cyclic phosphate + choline. The catalysed reaction is an N-(acyl)-sphingosylphosphoethanolamine = an N-(acyl)-sphingosyl-1,3-cyclic phosphate + ethanolamine. It catalyses the reaction a 1-acyl-sn-glycero-3-phosphocholine = a 1-acyl-sn-glycero-2,3-cyclic phosphate + choline. The enzyme catalyses a 1-acyl-sn-glycero-3-phosphoethanolamine = a 1-acyl-sn-glycero-2,3-cyclic phosphate + ethanolamine. Dermonecrotic toxins cleave the phosphodiester linkage between the phosphate and headgroup of certain phospholipids (sphingolipid and lysolipid substrates), forming an alcohol (often choline) and a cyclic phosphate. This toxin acts on sphingomyelin (SM). It may also act on ceramide phosphoethanolamine (CPE), lysophosphatidylcholine (LPC) and lysophosphatidylethanolamine (LPE), but not on lysophosphatidylserine (LPS), and lysophosphatidylglycerol (LPG). It acts by transphosphatidylation, releasing exclusively cyclic phosphate products as second products. Induces dermonecrosis, hemolysis, increased vascular permeability, edema, inflammatory response, and platelet aggregation. This is Dermonecrotic toxin Ls4SicTox-alphaIII1i from Loxosceles sp. (strain 4 GJB-2008) (Recluse spider).